A 141-amino-acid chain; its full sequence is Secreted RxLR effector protein 69 (141 aa).

The signal sequence occupies residues 1 to 19 (MHSSTILFVLGAAILAVNG). Positions 38 to 53 (RLLRSNLMKHETGEER) match the RxLR-dEER motif. Asparagine 120 carries N-linked (GlcNAc...) asparagine glycosylation.

Belongs to the RxLR effector family.

It is found in the secreted. The protein resides in the host nucleus. Functionally, secreted effector that completely suppresses the host cell death induced by cell death-inducing proteins. The polypeptide is Secreted RxLR effector protein 69 (Plasmopara viticola (Downy mildew of grapevine)).